Here is a 488-residue protein sequence, read N- to C-terminus: MEVVTVALIAVIISSILYLLFGSSGHKNLPPGPKPWPIVGNLLQLGEKPHAQFAELAQTYGDIFTLKMGTETVVVASTSSAASEILKTHDRILSARYVFQSFRVKGHVENSIVWSDCTETWKNLRKVCRTELFTQKMIESQAHVREKKCEEMVEYLMKKQGEEVKIVEVIFGTLVNIFGNLIFSQNIFELGXPNSGSSEFKEYLWRMLELGNSTNPADYFPMLGKFDLFGQRKEVAECLKGIYAIWGAMLQERKLAKKVDGYQSKNDFVDVCLDSGLNDYQINALLMELFGAGTETSASTIEWAMTELTKNPKITAKLRSELQTVVGERSVKESDFPNLPYLEATVKETLRLHPPTPLLLPRRALETCTILNYTIPKDCQIMVNAWGIGRDPKTWIDPLTFSPERFLNSSVDFRGNDFSLIPFGAGRRICPGLPIANQFIALLVATFVQNLDWCLPNGMSVDHLIVEEKFGLTLQKEPPLFIVPKSRV.

A helical membrane pass occupies residues 3–23; it reads VVTVALIAVIISSILYLLFGS. Cysteine 430 provides a ligand contact to heme.

The protein belongs to the cytochrome P450 family. The cofactor is heme.

The protein resides in the endoplasmic reticulum membrane. It is found in the microsome membrane. It carries out the reaction (S)-N-methylcoclaurine + reduced [NADPH--hemoprotein reductase] + O2 = (S)-3'-hydroxy-N-methylcoclaurine + oxidized [NADPH--hemoprotein reductase] + H2O + H(+). The protein operates within alkaloid biosynthesis; (S)-reticuline biosynthesis; (S)-reticuline from (S)-norcoclaurine: step 3/4. In terms of biological role, 3'-hydroxylation of (S)-N-methylcoclaurine. The polypeptide is (S)-N-methylcoclaurine 3'-hydroxylase isozyme 2 (CYP80B2) (Eschscholzia californica (California poppy)).